The primary structure comprises 484 residues: 1,3-beta-glucanosyltransferase GAS5 (484 aa).

An N-terminal signal peptide occupies residues Met-1–Ala-19. 2 N-linked (GlcNAc...) asparagine glycosylation sites follow: Asn-24 and Asn-60. A disulfide bond links Cys-71 and Cys-100. Tyr-89, Asn-159, and Glu-160 together coordinate (1,3-beta-D-glucosyl)n. Glu-160 serves as the catalytic Proton donor. A glycan (N-linked (GlcNAc...) asparagine) is linked at Asn-166. (1,3-beta-D-glucosyl)n-binding residues include Asp-201 and Arg-206. Intrachain disulfides connect Cys-215/Cys-348 and Cys-234/Cys-265. Glu-262 acts as the Nucleophile in catalysis. Residue Tyr-295 participates in (1,3-beta-D-glucosyl)n binding. N-linked (GlcNAc...) asparagine glycosylation is found at Asn-299, Asn-344, and Asn-359. The segment at Thr-383–Gly-462 is disordered. Positions Lys-394–Thr-404 are enriched in acidic residues. A compositionally biased stretch (low complexity) spans Ser-405–Gly-462. Residue Gly-462 is the site of GPI-anchor amidated glycine attachment. The propeptide at Ala-463–Leu-484 is removed in mature form.

This sequence belongs to the glycosyl hydrolase 72 family. In terms of processing, the GPI-anchor is attached to the protein in the endoplasmic reticulum and serves to target the protein to the cell surface. There, the glucosamine-inositol phospholipid moiety is cleaved off and the GPI-modified mannoprotein is covalently attached via its lipidless GPI glycan remnant to the 1,6-beta-glucan of the outer cell wall layer.

The protein resides in the secreted. It localises to the cell wall. It is found in the membrane. Its function is as follows. Splits internally a 1,3-beta-glucan molecule and transfers the newly generated reducing end (the donor) to the non-reducing end of another 1,3-beta-glucan molecule (the acceptor) forming a 1,3-beta linkage, resulting in the elongation of 1,3-beta-glucan chains in the cell wall. Involved in cell wall biosynthesis and morphogenesis. The polypeptide is 1,3-beta-glucanosyltransferase GAS5 (GAS5) (Saccharomyces cerevisiae (strain ATCC 204508 / S288c) (Baker's yeast)).